The primary structure comprises 372 residues: UDP-N-acetylglucosamine--N-acetylmuramyl-(pentapeptide) pyrophosphoryl-undecaprenol N-acetylglucosamine transferase (372 aa).

UDP-N-acetyl-alpha-D-glucosamine is bound by residues 21-23 (TAG), Asn-135, Arg-172, Ser-206, and Gln-303.

It belongs to the glycosyltransferase 28 family. MurG subfamily.

The protein localises to the cell membrane. It carries out the reaction di-trans,octa-cis-undecaprenyl diphospho-N-acetyl-alpha-D-muramoyl-L-alanyl-D-glutamyl-meso-2,6-diaminopimeloyl-D-alanyl-D-alanine + UDP-N-acetyl-alpha-D-glucosamine = di-trans,octa-cis-undecaprenyl diphospho-[N-acetyl-alpha-D-glucosaminyl-(1-&gt;4)]-N-acetyl-alpha-D-muramoyl-L-alanyl-D-glutamyl-meso-2,6-diaminopimeloyl-D-alanyl-D-alanine + UDP + H(+). Its pathway is cell wall biogenesis; peptidoglycan biosynthesis. Its function is as follows. Cell wall formation. Catalyzes the transfer of a GlcNAc subunit on undecaprenyl-pyrophosphoryl-MurNAc-pentapeptide (lipid intermediate I) to form undecaprenyl-pyrophosphoryl-MurNAc-(pentapeptide)GlcNAc (lipid intermediate II). This chain is UDP-N-acetylglucosamine--N-acetylmuramyl-(pentapeptide) pyrophosphoryl-undecaprenol N-acetylglucosamine transferase, found in Paenarthrobacter aurescens (strain TC1).